The following is a 440-amino-acid chain: Homocitrate synthase, mitochondrial (440 aa).

The span at 1–23 (MSENNEFQSVTESTTAPTTSNPY) shows a compositional bias: polar residues. Residues 1–27 (MSENNEFQSVTESTTAPTTSNPYGPNP) form a disordered region. One can recognise a Pyruvate carboxyltransferase domain in the interval 37 to 290 (FQLIDSTLRE…RSKYKLHKIR (254 aa)). Arg-45 serves as a coordination point for 2-oxoglutarate. Mg(2+) is bound at residue Glu-46. Residues His-105, Arg-165, and Thr-199 each contribute to the 2-oxoglutarate site. Residues His-226 and His-228 each coordinate Mg(2+). His-323 (proton acceptor) is an active-site residue. Residue Ser-399 is modified to Phosphoserine. Thr-410 carries the post-translational modification Phosphothreonine.

This sequence belongs to the alpha-IPM synthase/homocitrate synthase family. Homocitrate synthase LYS20/LYS21 subfamily. The cofactor is Mg(2+). Mn(2+) is required as a cofactor.

It is found in the mitochondrion. It carries out the reaction acetyl-CoA + 2-oxoglutarate + H2O = (2R)-homocitrate + CoA + H(+). It functions in the pathway amino-acid biosynthesis; L-lysine biosynthesis via AAA pathway; L-alpha-aminoadipate from 2-oxoglutarate: step 1/5. In terms of biological role, catalyzes the aldol-type condensation of 2-oxoglutarate with acetyl-CoA to yield homocitrate. Carries out the first step of the alpha-aminoadipate (AAA) lysine biosynthesis pathway. The sequence is that of Homocitrate synthase, mitochondrial (LYS21) from Saccharomyces cerevisiae (strain ATCC 204508 / S288c) (Baker's yeast).